Consider the following 100-residue polypeptide: UPF0213 protein YhbQ (100 aa).

Residues threonine 2–arginine 77 form the GIY-YIG domain.

It belongs to the UPF0213 family.

This Salmonella arizonae (strain ATCC BAA-731 / CDC346-86 / RSK2980) protein is UPF0213 protein YhbQ.